Consider the following 272-residue polypeptide: 27-O-demethylrifamycin SV methyltransferase (272 aa).

S-adenosyl-L-methionine-binding positions include Ser-89, Gln-94, 117 to 118 (DA), Leu-134, and His-139.

It belongs to the class I-like SAM-binding methyltransferase superfamily. In terms of assembly, exists probably as a trimer.

It catalyses the reaction 27-O-demethylrifamycin SV + S-adenosyl-L-methionine = rifamycin SV + S-adenosyl-L-homocysteine + H(+). The protein operates within antibiotic biosynthesis; rifamycin B biosynthesis. Slightly inhibited by Ca(2+) and Mg(2+). Strongly inhibited by Zn(2+), Ni(2+) and Co(2+). In terms of biological role, catalyzes the methylation of 27-O-demethylrifamycin SV (DMRSV) to rifamycin SV. The chain is 27-O-demethylrifamycin SV methyltransferase from Amycolatopsis mediterranei (strain S699) (Nocardia mediterranei).